The chain runs to 530 residues: Chaperone Ric-8A (530 aa).

Ser435 is subject to Phosphoserine. Thr440 and Thr442 each carry phosphothreonine. Residues Ser501, Ser522, Ser523, and Ser527 each carry the phosphoserine modification.

The protein belongs to the synembryn family. As to quaternary structure, interacts with GDP-bound G alpha proteins GNAI1, GNAO1 and GNAQ, and with GNA13 with lower affinity. Does not interact with G-alpha proteins when they are in complex with subunits beta and gamma. Interacts (via C-terminus) with RGS14; the interaction stimulates the dissociation of the complex between RGS14 and the active GTP-bound form of GNAI1. Interacts with NCS1; interaction is favored in the absence of Ca(2+) and myristoylation of NCS1 is not required. In terms of processing, phosphorylated at Ser-435 and Thr-440 by CK2, stabilizing its interface with G alpha proteins.

Its subcellular location is the cytoplasm. The protein localises to the cell cortex. Functionally, chaperone that specifically binds and folds nascent G alpha proteins prior to G protein heterotrimer formation, promoting their stability and activity: folds GNAI1, GNAO1, GNA13 and GNAQ. Does not fold G(s) G-alpha proteins GNAS nor GNAL. Also acts as a guanine nucleotide exchange factor (GEF) for G alpha proteins by stimulating exchange of bound GDP for free GTP. Involved in regulation of microtubule pulling forces during mitotic movement of chromosomes by stimulating G(i)-alpha protein (GNAI1), possibly leading to release G(i)-alpha-GTP and NuMA proteins from the NuMA-GPSM2-G(i)-alpha-GDP complex. Also acts as an activator for G(q)-alpha (GNAQ) protein by enhancing the G(q)-coupled receptor-mediated ERK activation. In Macaca fascicularis (Crab-eating macaque), this protein is Chaperone Ric-8A (RIC8A).